Consider the following 508-residue polypeptide: Histidine ammonia-lyase (508 aa).

The segment at residues 143-145 is a cross-link (5-imidazolinone (Ala-Gly)); sequence ASG. Serine 144 carries the 2,3-didehydroalanine (Ser) modification.

It belongs to the PAL/histidase family. Contains an active site 4-methylidene-imidazol-5-one (MIO), which is formed autocatalytically by cyclization and dehydration of residues Ala-Ser-Gly.

The protein resides in the cytoplasm. The enzyme catalyses L-histidine = trans-urocanate + NH4(+). The protein operates within amino-acid degradation; L-histidine degradation into L-glutamate; N-formimidoyl-L-glutamate from L-histidine: step 1/3. This chain is Histidine ammonia-lyase, found in Klebsiella pneumoniae subsp. pneumoniae (strain ATCC 700721 / MGH 78578).